Reading from the N-terminus, the 60-residue chain is MNAAFIAALLILGALTLDAMAYSFTCERIPCTNNSDCHGSDLCQCRPPRGDGFSYFCSEY.

A signal peptide spans Met-1–Ala-21. Positions Arg-49 to Asp-51 match the Cell attachment site motif.

The protein belongs to the ixodegrin family. In terms of processing, contains 3 disulfide bonds. In terms of tissue distribution, expressed in salivary glands.

It localises to the secreted. Tick salivary platelet aggregation inhibitor that plays an important part in the anti-hemostatic strategy of ticks. Inhibits platelet aggregation induced by ADP, thrombin and thromboxane A2 (TXA2). Blocks platelet adhesion to soluble collagen (most probably through the binding to alpha-2/beta-1 integrin (ITGA2/ITGB1)) and binds to purified glycoprotein IIb/IIIa (ITGA2B/ITGB3) in a dose-dependent manner. In vivo, reduces thrombus weight effectively in a rat arteriovenous shunt model and inhibits thrombosis in a carrageenan-induced mouse tail thrombosis model. This is Ixodegrin-like peptide from Ixodes scapularis (Black-legged tick).